Reading from the N-terminus, the 378-residue chain is Manganese peroxidase 1 (378 aa).

An N-terminal signal peptide occupies residues 1–21 (MAFKSLIAFVALAAAVRAAPT). 5 disulfide bridges follow: cysteine 24/cysteine 36, cysteine 35/cysteine 310, cysteine 54/cysteine 138, cysteine 274/cysteine 340, and cysteine 362/cysteine 369. The Mn(2+) site is built by glutamate 56 and glutamate 60. Histidine 67 (proton acceptor) is an active-site residue. Ca(2+)-binding residues include aspartate 68, glycine 83, aspartate 85, and serine 87. 2 N-linked (GlcNAc...) asparagine glycosylation sites follow: asparagine 97 and asparagine 152. Histidine 194 contributes to the heme b binding site. Residue serine 195 coordinates Ca(2+). Aspartate 200 is a binding site for Mn(2+). Ca(2+) is bound by residues aspartate 212, threonine 214, threonine 217, and aspartate 219. Asparagine 238 carries N-linked (GlcNAc...) asparagine glycosylation.

This sequence belongs to the peroxidase family. Ligninase subfamily. Ca(2+) is required as a cofactor. It depends on heme b as a cofactor.

It localises to the secreted. The enzyme catalyses 2 Mn(2+) + H2O2 + 2 H(+) = 2 Mn(3+) + 2 H2O. Its function is as follows. Catalyzes the oxidation of Mn(2+) to Mn(3+). The latter, acting as a diffusible redox mediator, is capable of oxidizing a variety of lignin compounds. This chain is Manganese peroxidase 1 (MNP1), found in Phanerodontia chrysosporium (White-rot fungus).